The chain runs to 199 residues: Recombination protein RecR (199 aa).

The segment at 56 to 71 (CQVCFHLSAESTCEIC) adopts a C4-type zinc-finger fold. The region spanning 79–173 (QTLCVVADSR…KVTRIAFGLP (95 aa)) is the Toprim domain.

This sequence belongs to the RecR family.

In terms of biological role, may play a role in DNA repair. It seems to be involved in an RecBC-independent recombinational process of DNA repair. It may act with RecF and RecO. This Gloeothece citriformis (strain PCC 7424) (Cyanothece sp. (strain PCC 7424)) protein is Recombination protein RecR.